We begin with the raw amino-acid sequence, 293 residues long: 4-hydroxy-tetrahydrodipicolinate synthase (293 aa).

T45 is a binding site for pyruvate. Y133 serves as the catalytic Proton donor/acceptor. The active-site Schiff-base intermediate with substrate is the K161. Residue I203 participates in pyruvate binding.

It belongs to the DapA family. Homotetramer; dimer of dimers.

It is found in the cytoplasm. It carries out the reaction L-aspartate 4-semialdehyde + pyruvate = (2S,4S)-4-hydroxy-2,3,4,5-tetrahydrodipicolinate + H2O + H(+). It participates in amino-acid biosynthesis; L-lysine biosynthesis via DAP pathway; (S)-tetrahydrodipicolinate from L-aspartate: step 3/4. Its function is as follows. Catalyzes the condensation of (S)-aspartate-beta-semialdehyde [(S)-ASA] and pyruvate to 4-hydroxy-tetrahydrodipicolinate (HTPA). The chain is 4-hydroxy-tetrahydrodipicolinate synthase from Shewanella denitrificans (strain OS217 / ATCC BAA-1090 / DSM 15013).